A 227-amino-acid chain; its full sequence is Ribose-5-phosphate isomerase A (227 aa).

Substrate contacts are provided by residues 26-29 (TGST), 82-85 (DGAD), and 95-98 (KGGG). E104 (proton acceptor) is an active-site residue. K122 lines the substrate pocket.

This sequence belongs to the ribose 5-phosphate isomerase family. Homodimer.

It catalyses the reaction aldehydo-D-ribose 5-phosphate = D-ribulose 5-phosphate. It functions in the pathway carbohydrate degradation; pentose phosphate pathway; D-ribose 5-phosphate from D-ribulose 5-phosphate (non-oxidative stage): step 1/1. In terms of biological role, catalyzes the reversible conversion of ribose-5-phosphate to ribulose 5-phosphate. This chain is Ribose-5-phosphate isomerase A, found in Streptococcus pyogenes serotype M5 (strain Manfredo).